The chain runs to 103 residues: ESAT-6-like protein EsxF (103 aa).

It belongs to the WXG100 family. CFP-10 subfamily.

The protein resides in the secreted. In Mycobacterium tuberculosis (strain CDC 1551 / Oshkosh), this protein is ESAT-6-like protein EsxF.